Here is a 62-residue protein sequence, read N- to C-terminus: MDHSVLNVLVCPICKANLYYGKENQVLVCKADKLAYPIRENIPVMLVEEAKKMTLEEVKKYG.

This sequence belongs to the UPF0434 family.

The chain is UPF0434 protein FTM_0733 from Francisella tularensis subsp. mediasiatica (strain FSC147).